A 708-amino-acid chain; its full sequence is Prolyl 3-hydroxylase 2 (708 aa).

The signal sequence occupies residues M1–G24. TPR repeat units lie at residues F44 to L77, R148 to H181, H210 to E243, and P306 to D339. N449 and N549 each carry an N-linked (GlcNAc...) asparagine glycan. The 115-residue stretch at T557–L671 folds into the Fe2OG dioxygenase domain. Fe cation-binding residues include H580, D582, and H652. R662 is a catalytic residue. The Prevents secretion from ER signature appears at K705–L708.

The protein belongs to the leprecan family. The cofactor is Fe cation. L-ascorbate serves as cofactor. Expression localized to the epithelia of bile ducts and to the sacroplasm of heart muscle and skeletal muscle. In the pancreas, localized to a subpopulation of Langerhans islet cells and in the salivary gland, expressed in acinar cells (at protein level). Expressed in adult heart, placenta, lung, liver, skeletal muscle and kidney. Detected in fetal heart, spleen, lung, liver skeletal muscle and kidney.

The protein resides in the endoplasmic reticulum. It localises to the sarcoplasmic reticulum. The protein localises to the golgi apparatus. It carries out the reaction L-prolyl-[collagen] + 2-oxoglutarate + O2 = trans-3-hydroxy-L-prolyl-[collagen] + succinate + CO2. Its activity is regulated as follows. Inhibited by pyridine 2,4-dicarboxylate, an analog of 2-oxoglutarate. Functionally, prolyl 3-hydroxylase that catalyzes the post-translational formation of 3-hydroxyproline on collagens. Contributes to proline 3-hydroxylation of collagen COL4A1 and COL1A1 in tendons, the eye sclera and in the eye lens capsule. Has high activity with the type IV collagen COL4A1, and lower activity with COL1A1. Catalyzes hydroxylation of the first Pro in Gly-Pro-Hyp sequences where Hyp is 4-hydroxyproline. Has no activity on substrates that lack 4-hydroxyproline in the third position. This Homo sapiens (Human) protein is Prolyl 3-hydroxylase 2.